We begin with the raw amino-acid sequence, 469 residues long: UDP-N-acetylmuramate--L-alanine ligase (469 aa).

Gly112–Thr118 is a binding site for ATP.

This sequence belongs to the MurCDEF family.

The protein localises to the cytoplasm. It catalyses the reaction UDP-N-acetyl-alpha-D-muramate + L-alanine + ATP = UDP-N-acetyl-alpha-D-muramoyl-L-alanine + ADP + phosphate + H(+). It participates in cell wall biogenesis; peptidoglycan biosynthesis. In terms of biological role, cell wall formation. In Herminiimonas arsenicoxydans, this protein is UDP-N-acetylmuramate--L-alanine ligase.